A 237-amino-acid chain; its full sequence is Uridylate kinase (237 aa).

An ATP-binding site is contributed by 12–15; sequence KLSG. The interval 20 to 25 is involved in allosteric activation by GTP; that stretch reads GENGFG. Gly-54 contacts UMP. ATP contacts are provided by Gly-55 and Arg-59. UMP-binding positions include Asp-72 and 133 to 140; that span reads TGNPYFST. ATP contacts are provided by Tyr-166 and Asp-169.

This sequence belongs to the UMP kinase family. As to quaternary structure, homohexamer.

Its subcellular location is the cytoplasm. The catalysed reaction is UMP + ATP = UDP + ADP. It functions in the pathway pyrimidine metabolism; CTP biosynthesis via de novo pathway; UDP from UMP (UMPK route): step 1/1. With respect to regulation, allosterically activated by GTP. Inhibited by UTP. Functionally, catalyzes the reversible phosphorylation of UMP to UDP. This is Uridylate kinase from Clostridium perfringens (strain ATCC 13124 / DSM 756 / JCM 1290 / NCIMB 6125 / NCTC 8237 / Type A).